We begin with the raw amino-acid sequence, 396 residues long: S-adenosylmethionine synthase (396 aa).

His16 lines the ATP pocket. Asp18 provides a ligand contact to Mg(2+). Glu44 contributes to the K(+) binding site. L-methionine-binding residues include Glu57 and Gln100. The interval 100–110 (QSPDIAQGVDR) is flexible loop. ATP-binding positions include 167-169 (DAK), 233-234 (RF), Asp242, 248-249 (RK), Ala265, and Lys269. Asp242 is a binding site for L-methionine. Position 273 (Lys273) interacts with L-methionine.

It belongs to the AdoMet synthase family. In terms of assembly, homotetramer; dimer of dimers. Requires Mg(2+) as cofactor. The cofactor is K(+).

It is found in the cytoplasm. The enzyme catalyses L-methionine + ATP + H2O = S-adenosyl-L-methionine + phosphate + diphosphate. The protein operates within amino-acid biosynthesis; S-adenosyl-L-methionine biosynthesis; S-adenosyl-L-methionine from L-methionine: step 1/1. Catalyzes the formation of S-adenosylmethionine (AdoMet) from methionine and ATP. The overall synthetic reaction is composed of two sequential steps, AdoMet formation and the subsequent tripolyphosphate hydrolysis which occurs prior to release of AdoMet from the enzyme. The polypeptide is S-adenosylmethionine synthase (Paraburkholderia xenovorans (strain LB400)).